We begin with the raw amino-acid sequence, 471 residues long: Glutamate--tRNA ligase (471 aa).

The 'HIGH' region motif lies at 10–20 (PSPTGYLHIGG). 4 residues coordinate Zn(2+): C107, C109, C134, and E136. Positions 244–248 (RLSKR) match the 'KMSKS' region motif. K247 provides a ligand contact to ATP.

The protein belongs to the class-I aminoacyl-tRNA synthetase family. Glutamate--tRNA ligase type 1 subfamily. Monomer. Zn(2+) serves as cofactor.

It is found in the cytoplasm. The catalysed reaction is tRNA(Glu) + L-glutamate + ATP = L-glutamyl-tRNA(Glu) + AMP + diphosphate. Its function is as follows. Catalyzes the attachment of glutamate to tRNA(Glu) in a two-step reaction: glutamate is first activated by ATP to form Glu-AMP and then transferred to the acceptor end of tRNA(Glu). This chain is Glutamate--tRNA ligase, found in Anaeromyxobacter sp. (strain Fw109-5).